The chain runs to 870 residues: Elastin (870 aa).

A signal peptide spans 1–27; sequence MAGLTAAVPQPGVLLILLLNLLHPAQP. 2 positions are modified to 4-hydroxyproline: proline 39 and proline 75. A Hydroxyproline modification is found at proline 87. Position 105 is a 4-hydroxyproline (proline 105). An allysine mark is found at lysine 122 and lysine 126. 4 positions are modified to 4-hydroxyproline: proline 207, proline 220, proline 223, and proline 244. An allysine mark is found at lysine 290 and lysine 309. Proline 338 carries the post-translational modification 4-hydroxyproline. An allysine mark is found at lysine 360 and lysine 363. Proline 375 is modified (hydroxyproline). 4-hydroxyproline is present on residues proline 402 and proline 408. Hydroxyproline occurs at positions 413 and 418. Residues lysine 434, lysine 438, lysine 441, lysine 485, and lysine 488 each carry the allysine modification. 4-hydroxyproline occurs at positions 518 and 539. Allysine occurs at positions 554, 558, 615, 619, and 623. Residues proline 637, proline 646, proline 662, and proline 670 each carry the 4-hydroxyproline modification. Lysine 677 and lysine 680 each carry allysine. Proline 715 carries the 4-hydroxyproline modification. An allysine mark is found at lysine 730, lysine 734, lysine 793, and lysine 796. At proline 842 the chain carries 4-hydroxyproline. An intrachain disulfide couples cysteine 860 to cysteine 865.

This sequence belongs to the elastin family. As to quaternary structure, the polymeric elastin chains are cross-linked together into an extensible 3D network. Forms a ternary complex with BGN and MFAP2. Interacts with MFAP2 via divalent cations (calcium &gt; magnesium &gt; manganese) in a dose-dependent and saturating manner. Interacts with FBLN5 and FBN1. Forms a ternary complex with FBN1 and FBLN2 or FBLN5. Interacts with MFAP4 in a Ca (2+)-dependent manner; this interaction promotes ELN self-assembly. Interacts with EFEMP2 with moderate affinity. Post-translationally, elastin is formed through the cross-linking of its soluble precursor tropoelastin. Cross-linking is initiated through the action of lysyl oxidase on exposed lysines to form allysine. Subsequent spontaneous condensation reactions with other allysine or unmodified lysine residues result in various bi-, tri-, and tetrafunctional cross-links. The most abundant cross-links in mature elastin fibers are lysinonorleucine, allysine aldol, desmosine, and isodesmosine. In terms of processing, hydroxylation on proline residues within the sequence motif, GXPG, is most likely to be 4-hydroxy as this fits the requirement for 4-hydroxylation in vertebrates.

It localises to the secreted. The protein localises to the extracellular space. It is found in the extracellular matrix. Major structural protein of tissues such as aorta and nuchal ligament, which must expand rapidly and recover completely. Molecular determinant of the late arterial morphogenesis, stabilizing arterial structure by regulating proliferation and organization of vascular smooth muscle. The protein is Elastin (Eln) of Rattus norvegicus (Rat).